The following is a 329-amino-acid chain: 4-hydroxy-3-methylbut-2-enyl diphosphate reductase (329 aa).

Residue C27 participates in [4Fe-4S] cluster binding. Residues H56 and H89 each coordinate (2E)-4-hydroxy-3-methylbut-2-enyl diphosphate. The dimethylallyl diphosphate site is built by H56 and H89. Positions 56 and 89 each coordinate isopentenyl diphosphate. Residue C111 participates in [4Fe-4S] cluster binding. H139 lines the (2E)-4-hydroxy-3-methylbut-2-enyl diphosphate pocket. H139 serves as a coordination point for dimethylallyl diphosphate. H139 contributes to the isopentenyl diphosphate binding site. The Proton donor role is filled by E141. A (2E)-4-hydroxy-3-methylbut-2-enyl diphosphate-binding site is contributed by T179. C209 serves as a coordination point for [4Fe-4S] cluster. (2E)-4-hydroxy-3-methylbut-2-enyl diphosphate contacts are provided by S237, S238, N239, and S281. 4 residues coordinate dimethylallyl diphosphate: S237, S238, N239, and S281. 4 residues coordinate isopentenyl diphosphate: S237, S238, N239, and S281.

It belongs to the IspH family. The cofactor is [4Fe-4S] cluster.

The catalysed reaction is isopentenyl diphosphate + 2 oxidized [2Fe-2S]-[ferredoxin] + H2O = (2E)-4-hydroxy-3-methylbut-2-enyl diphosphate + 2 reduced [2Fe-2S]-[ferredoxin] + 2 H(+). It carries out the reaction dimethylallyl diphosphate + 2 oxidized [2Fe-2S]-[ferredoxin] + H2O = (2E)-4-hydroxy-3-methylbut-2-enyl diphosphate + 2 reduced [2Fe-2S]-[ferredoxin] + 2 H(+). Its pathway is isoprenoid biosynthesis; dimethylallyl diphosphate biosynthesis; dimethylallyl diphosphate from (2E)-4-hydroxy-3-methylbutenyl diphosphate: step 1/1. The protein operates within isoprenoid biosynthesis; isopentenyl diphosphate biosynthesis via DXP pathway; isopentenyl diphosphate from 1-deoxy-D-xylulose 5-phosphate: step 6/6. Its function is as follows. Catalyzes the conversion of 1-hydroxy-2-methyl-2-(E)-butenyl 4-diphosphate (HMBPP) into a mixture of isopentenyl diphosphate (IPP) and dimethylallyl diphosphate (DMAPP). Acts in the terminal step of the DOXP/MEP pathway for isoprenoid precursor biosynthesis. The sequence is that of 4-hydroxy-3-methylbut-2-enyl diphosphate reductase from Methylibium petroleiphilum (strain ATCC BAA-1232 / LMG 22953 / PM1).